A 246-amino-acid polypeptide reads, in one-letter code: NADH-quinone oxidoreductase subunit C (246 aa).

Belongs to the complex I 30 kDa subunit family. In terms of assembly, NDH-1 is composed of 14 different subunits. Subunits NuoB, C, D, E, F, and G constitute the peripheral sector of the complex.

It localises to the cell inner membrane. It carries out the reaction a quinone + NADH + 5 H(+)(in) = a quinol + NAD(+) + 4 H(+)(out). Functionally, NDH-1 shuttles electrons from NADH, via FMN and iron-sulfur (Fe-S) centers, to quinones in the respiratory chain. The immediate electron acceptor for the enzyme in this species is believed to be ubiquinone. Couples the redox reaction to proton translocation (for every two electrons transferred, four hydrogen ions are translocated across the cytoplasmic membrane), and thus conserves the redox energy in a proton gradient. The chain is NADH-quinone oxidoreductase subunit C from Halorhodospira halophila (strain DSM 244 / SL1) (Ectothiorhodospira halophila (strain DSM 244 / SL1)).